A 110-amino-acid polypeptide reads, in one-letter code: MPKTKKKDSSSDSDSGPDDRIKPASKKAKESDAPNSDPKDSGENGATSWTLEGLRQVRINEFRGRKSVDIREFYDKGGQILPGKKGISLSLIQWKKLLEVAEEVTRAIEN.

A disordered region spans residues 1–50; that stretch reads MPKTKKKDSSSDSDSGPDDRIKPASKKAKESDAPNSDPKDSGENGATSWT. Positions 17 to 42 are enriched in basic and acidic residues; sequence PDDRIKPASKKAKESDAPNSDPKDSG.

It belongs to the transcriptional coactivator PC4 family.

Its subcellular location is the nucleus. General coactivator that functions cooperatively with TAFs and mediates functional interactions between upstream activators and the general transcriptional machinery. Binds single-stranded DNA. Binds specifically to the NssBF element, a short nucleotide sequence of the 1731 retrotransposon, to repress promoter activity. In Drosophila melanogaster (Fruit fly), this protein is RNA polymerase II transcriptional coactivator (Ssb-c31a).